Reading from the N-terminus, the 172-residue chain is Photosystem I assembly protein Ycf3 (172 aa).

3 TPR repeats span residues 35-68 (AFSY…EVDA), 72-105 (SYIL…NPSL), and 120-153 (GEQA…APTN).

Belongs to the Ycf3 family.

It is found in the plastid. Its subcellular location is the chloroplast thylakoid membrane. Essential for the assembly of the photosystem I (PSI) complex. May act as a chaperone-like factor to guide the assembly of the PSI subunits. This chain is Photosystem I assembly protein Ycf3, found in Chlamydomonas reinhardtii (Chlamydomonas smithii).